We begin with the raw amino-acid sequence, 131 residues long: Histone H2B.1 (131 aa).

Positions 1-20 are enriched in basic and acidic residues; the sequence is MAPPKAEKKPASKAPAEKKP. A disordered region spans residues 1-39; the sequence is MAPPKAEKKPASKAPAEKKPAAKKTASATDSKKRTKTRK. Lys-8 and Lys-9 each carry N6-acetyllysine; alternate. Glycyl lysine isopeptide (Lys-Gly) (interchain with G-Cter in SUMO); alternate cross-links involve residues Lys-8 and Lys-9. Residue Ser-12 is modified to Phosphoserine. Lys-13 is modified (N6-acetyllysine). N6-acetyllysine; alternate is present on Lys-18. Lys-18 is covalently cross-linked (Glycyl lysine isopeptide (Lys-Gly) (interchain with G-Cter in SUMO); alternate). Residue Lys-19 forms a Glycyl lysine isopeptide (Lys-Gly) (interchain with G-Cter in SUMO) linkage. Lys-125 participates in a covalent cross-link: Glycyl lysine isopeptide (Lys-Gly) (interchain with G-Cter in ubiquitin).

The protein belongs to the histone H2B family. As to quaternary structure, the nucleosome is a histone octamer containing two molecules each of H2A, H2B, H3 and H4 assembled in one H3-H4 heterotetramer and two H2A-H2B heterodimers. The octamer wraps approximately 147 bp of DNA. Post-translationally, monoubiquitinated to form H2BK123ub1. H2BK123ub1 gives a specific tag for epigenetic transcriptional activation and is also prerequisite for H3K4me and H3K79me formation. H2BK123ub1 also modulates the formation of double-strand breaks during meiosis and is a prerequisite for DNA-damage checkpoint activation. Phosphorylated by STE20 to form H2BS10ph during progression through meiotic prophase. May be correlated with chromosome condensation. In terms of processing, acetylated by GCN5 to form H2BK11ac and H2BK16ac. H2BK16ac can also be formed by ESA1. Acetylation of N-terminal lysines and particularly formation of H2BK11acK16ac has a positive effect on transcription. Post-translationally, sumoylation to form H2BK6su or H2BK7su, and probably also H2BK16su or H2BK17su, occurs preferentially near the telomeres and represses gene transcription.

The protein localises to the nucleus. It localises to the chromosome. Its function is as follows. Core component of nucleosome. Nucleosomes wrap and compact DNA into chromatin, limiting DNA accessibility to the cellular machineries which require DNA as a template. Histones thereby play a central role in transcription regulation, DNA repair, DNA replication and chromosomal stability. DNA accessibility is regulated via a complex set of post-translational modifications of histones, also called histone code, and nucleosome remodeling. In Scheffersomyces stipitis (strain ATCC 58785 / CBS 6054 / NBRC 10063 / NRRL Y-11545) (Yeast), this protein is Histone H2B.1 (HTB1).